A 110-amino-acid polypeptide reads, in one-letter code: Histone H2A.1 (110 aa).

This sequence belongs to the histone H2A family. As to quaternary structure, the nucleosome is a histone octamer containing two molecules each of H2A, H2B, H3 and H4 assembled in one H3-H4 heterotetramer and two H2A-H2B heterodimers. The octamer wraps approximately 147 bp of DNA. Expressed in the generative cell within the bicellular pollen. Not detected in other reproductive or vegetative tissues.

The protein resides in the nucleus. The protein localises to the chromosome. In terms of biological role, core component of nucleosome. Nucleosomes wrap and compact DNA into chromatin, limiting DNA accessibility to the cellular machineries which require DNA as a template. Histones thereby play a central role in transcription regulation, DNA repair, DNA replication and chromosomal stability. DNA accessibility is regulated via a complex set of post-translational modifications of histones, also called histone code, and nucleosome remodeling. The protein is Histone H2A.1 (gcH2A) of Lilium longiflorum (Trumpet lily).